A 434-amino-acid polypeptide reads, in one-letter code: Tryptophan synthase beta chain 2 (434 aa).

Residue Lys110 is modified to N6-(pyridoxal phosphate)lysine.

Belongs to the TrpB family. Tetramer of two alpha and two beta chains. It depends on pyridoxal 5'-phosphate as a cofactor.

It carries out the reaction (1S,2R)-1-C-(indol-3-yl)glycerol 3-phosphate + L-serine = D-glyceraldehyde 3-phosphate + L-tryptophan + H2O. Its pathway is amino-acid biosynthesis; L-tryptophan biosynthesis; L-tryptophan from chorismate: step 5/5. Its function is as follows. The beta subunit is responsible for the synthesis of L-tryptophan from indole and L-serine. This Aquifex aeolicus (strain VF5) protein is Tryptophan synthase beta chain 2 (trpB2).